A 539-amino-acid chain; its full sequence is Cytochrome P450 monooxygenase pvhE (539 aa).

Residues 15–31 (VAFCSLVILCILFKVLT) traverse the membrane as a helical segment. The N-linked (GlcNAc...) asparagine glycan is linked to N379. C473 serves as a coordination point for heme.

Belongs to the cytochrome P450 family. Heme is required as a cofactor.

The protein localises to the membrane. Its pathway is secondary metabolite biosynthesis. In terms of biological role, cytochrome P450 monooxygenase; part of the gene cluster that mediates the biosynthesis of varicidin A, an antifungal natural product containing a cis-octahydrodecalin core. The PKS module of pvhA together with the enoylreductase pvhC catalyze the formation of the polyketide unit which is then conjugated to L-isoleucine by the condensation domain of the NRPS module. Activity of the Dieckmann cyclase domain (RED) of pvhA results in release of an acyclic tetramate. The cytochrome P450 monooxygenase pvhE then catalyzes the oxidation of the C21 methyl group to a to carboxylate group. The methyltransferase pvhD then further methylates the pvhE product. The Diels-Alderase pvhB is able to catalyze Diels-Alder cycloaddition using both pvhE and pvhD products as substrates to form the decalin ring, yielding varicidin B and A, respectively. The sequence is that of Cytochrome P450 monooxygenase pvhE from Talaromyces variabilis (Penicillium variabile).